Consider the following 430-residue polypeptide: Adenylosuccinate synthetase (430 aa).

GTP contacts are provided by residues 12–18 (GDEGKGK) and 40–42 (GHT). The active-site Proton acceptor is D13. Mg(2+) is bound by residues D13 and G40. IMP-binding positions include 13-16 (DEGK), 38-41 (NAGH), T130, R144, Q225, T240, and R304. H41 (proton donor) is an active-site residue. Residue 300–306 (ATTGRPR) coordinates substrate. GTP-binding positions include R306, 332–334 (KLD), and 414–416 (SIG).

This sequence belongs to the adenylosuccinate synthetase family. As to quaternary structure, homodimer. Requires Mg(2+) as cofactor.

Its subcellular location is the cytoplasm. The enzyme catalyses IMP + L-aspartate + GTP = N(6)-(1,2-dicarboxyethyl)-AMP + GDP + phosphate + 2 H(+). The protein operates within purine metabolism; AMP biosynthesis via de novo pathway; AMP from IMP: step 1/2. Its function is as follows. Plays an important role in the de novo pathway of purine nucleotide biosynthesis. Catalyzes the first committed step in the biosynthesis of AMP from IMP. This chain is Adenylosuccinate synthetase, found in Geobacter metallireducens (strain ATCC 53774 / DSM 7210 / GS-15).